A 254-amino-acid polypeptide reads, in one-letter code: uncharacterized protein (254 aa).

The protein belongs to the methyltransferase superfamily.

This is an uncharacterized protein from Mycobacterium tuberculosis (strain ATCC 25177 / H37Ra).